Consider the following 265-residue polypeptide: Proteasome subunit alpha (265 aa).

Positions E236 to D265 are disordered.

The protein belongs to the peptidase T1A family. As to quaternary structure, the 20S proteasome core is composed of 14 alpha and 14 beta subunits that assemble into four stacked heptameric rings, resulting in a barrel-shaped structure. The two inner rings, each composed of seven catalytic beta subunits, are sandwiched by two outer rings, each composed of seven alpha subunits. The catalytic chamber with the active sites is on the inside of the barrel. Has a gated structure, the ends of the cylinder being occluded by the N-termini of the alpha-subunits. Is capped by the proteasome-associated ATPase, ARC.

It is found in the cytoplasm. It functions in the pathway protein degradation; proteasomal Pup-dependent pathway. The formation of the proteasomal ATPase ARC-20S proteasome complex, likely via the docking of the C-termini of ARC into the intersubunit pockets in the alpha-rings, may trigger opening of the gate for substrate entry. Interconversion between the open-gate and close-gate conformations leads to a dynamic regulation of the 20S proteasome proteolysis activity. Functionally, component of the proteasome core, a large protease complex with broad specificity involved in protein degradation. The polypeptide is Proteasome subunit alpha (Mycobacterium leprae (strain Br4923)).